A 393-amino-acid polypeptide reads, in one-letter code: Acetylornithine aminotransferase (393 aa).

Residues 105-106 (GA) and Phe-138 each bind pyridoxal 5'-phosphate. Position 141 (Arg-141) interacts with N(2)-acetyl-L-ornithine. Pyridoxal 5'-phosphate is bound at residue 224–227 (DEVQ). At Lys-253 the chain carries N6-(pyridoxal phosphate)lysine. Ser-281 is a N(2)-acetyl-L-ornithine binding site. Residue Thr-282 coordinates pyridoxal 5'-phosphate.

It belongs to the class-III pyridoxal-phosphate-dependent aminotransferase family. ArgD subfamily. Homodimer. Pyridoxal 5'-phosphate serves as cofactor.

The protein localises to the cytoplasm. The catalysed reaction is N(2)-acetyl-L-ornithine + 2-oxoglutarate = N-acetyl-L-glutamate 5-semialdehyde + L-glutamate. It participates in amino-acid biosynthesis; L-arginine biosynthesis; N(2)-acetyl-L-ornithine from L-glutamate: step 4/4. The sequence is that of Acetylornithine aminotransferase from Haemophilus ducreyi (strain 35000HP / ATCC 700724).